Here is a 237-residue protein sequence, read N- to C-terminus: Ribonuclease 3 (237 aa).

The RNase III domain maps to 7–135 (IKEVEAKLKF…ILGAVYLDGG (129 aa)). Residue E48 coordinates Mg(2+). Residue D52 is part of the active site. The Mg(2+) site is built by N121 and E124. E124 is a catalytic residue. A DRBM domain is found at 160-229 (NPKNRLQQLT…AQEALDANDY (70 aa)).

This sequence belongs to the ribonuclease III family. As to quaternary structure, homodimer. Mg(2+) is required as a cofactor.

The protein resides in the cytoplasm. The catalysed reaction is Endonucleolytic cleavage to 5'-phosphomonoester.. Digests double-stranded RNA. Involved in the processing of primary rRNA transcript to yield the immediate precursors to the large and small rRNAs (23S and 16S). Processes some mRNAs, and tRNAs when they are encoded in the rRNA operon. Processes pre-crRNA and tracrRNA of type II CRISPR loci if present in the organism. In Chlamydia felis (strain Fe/C-56) (Chlamydophila felis), this protein is Ribonuclease 3.